Reading from the N-terminus, the 432-residue chain is Glutamine synthetase, chloroplastic (432 aa).

The GS beta-grasp domain maps to 79 to 159; the sequence is IIAEYIWIGG…VICDTYTPQG (81 aa). Positions 166 to 432 constitute a GS catalytic domain; sequence KRHKAAQIFS…LAAQKLSLNV (267 aa).

The protein belongs to the glutamine synthetase family. Homooctamer.

It localises to the plastid. Its subcellular location is the chloroplast. The catalysed reaction is L-glutamate + NH4(+) + ATP = L-glutamine + ADP + phosphate + H(+). Functionally, the light-modulated chloroplast enzyme, encoded by a nuclear gene and expressed primarily in leaves, is responsible for the reassimilation of the ammonia generated by photorespiration. The chain is Glutamine synthetase, chloroplastic (GLN2) from Daucus carota (Wild carrot).